The chain runs to 50 residues: MAREGLTLRCTDCKMENYITKKNKKTKPEKIEVKKHCHKCNKHTLHREKK.

The protein belongs to the bacterial ribosomal protein bL33 family.

The chain is Large ribosomal subunit protein bL33B from Mesomycoplasma hyopneumoniae (strain 7448) (Mycoplasma hyopneumoniae).